A 271-amino-acid chain; its full sequence is Uridine-cytidine kinase 1-A (271 aa).

24-32 (GGTASGKST) is an ATP binding site. Positions 81, 109, 114, 163, 172, and 180 each coordinate substrate. Aspartate 209 contributes to the ATP binding site. The segment at 241–271 (SQKRTFPGQGESGGLILPGKRTHLESSSRPH) is disordered. A compositionally biased stretch (basic and acidic residues) spans 262–271 (THLESSSRPH).

The protein belongs to the uridine kinase family.

It catalyses the reaction uridine + ATP = UMP + ADP + H(+). The catalysed reaction is cytidine + ATP = CMP + ADP + H(+). It participates in pyrimidine metabolism; CTP biosynthesis via salvage pathway; CTP from cytidine: step 1/3. The protein operates within pyrimidine metabolism; UMP biosynthesis via salvage pathway; UMP from uridine: step 1/1. Its function is as follows. Phosphorylates uridine and cytidine to uridine monophosphate and cytidine monophosphate. Does not phosphorylate deoxyribonucleosides or purine ribonucleosides. Can use ATP or GTP as a phosphate donor. This chain is Uridine-cytidine kinase 1-A (uck1-a), found in Xenopus laevis (African clawed frog).